Reading from the N-terminus, the 287-residue chain is Small ribosomal subunit protein uS2 (287 aa).

The tract at residues 233 to 287 (HKAPQDDIEPMAEWEKQLLQSGDSSGETRPISGTDRPLDGDLSKGPAPQDEELSD) is disordered. The span at 250–259 (LLQSGDSSGE) shows a compositional bias: polar residues.

It belongs to the universal ribosomal protein uS2 family.

In Tropheryma whipplei (strain TW08/27) (Whipple's bacillus), this protein is Small ribosomal subunit protein uS2.